A 317-amino-acid chain; its full sequence is Melanocyte-stimulating hormone receptor (317 aa).

The Extracellular portion of the chain corresponds to 1–37 (MPVLGSQRRLLGSLNCTPPATFPLTLAPNRTGPQCLE). N29 is a glycosylation site (N-linked (GlcNAc...) asparagine). A helical membrane pass occupies residues 38-63 (VAIPDGLFLSLGLVSLVENVLVVAAI). The Cytoplasmic segment spans residues 64-72 (AKNRNLQSP). Residues 73–93 (MYYFICCLAMSDLLVSVSNVL) form a helical membrane-spanning segment. The Extracellular segment spans residues 94-118 (ETAVMLLLEAGALAARAAVVQQLDN). A helical membrane pass occupies residues 119–140 (VIDVLICGSMVSSLCFLGAIAV). Topologically, residues 141–163 (DRYISIFYALRYHSVVTLPRAWR) are cytoplasmic. A helical transmembrane segment spans residues 164–183 (IIAAIWVASILTSLLFITYY). Over 184–191 (NHTVVLLC) the chain is Extracellular. The chain crosses the membrane as a helical span at residues 192-211 (LVGFFIAMLALMAVLYVHML). Residues 212–240 (ARACQHARGIARLQKRQRPIHQGFGLKGA) lie on the Cytoplasmic side of the membrane. The helical transmembrane segment at 241–266 (ATLTILLGVFFLCWGPFFLHLSLIVL) threads the bilayer. Over 267–279 (CPQHPTCGCIFKN) the chain is Extracellular. The chain crosses the membrane as a helical span at residues 280–300 (FNLFLALIICNAIVDPLIYAF). Residues 301–317 (RSQELRKTLQEVLQCSW) are Cytoplasmic-facing. The S-palmitoyl cysteine moiety is linked to residue C315.

This sequence belongs to the G-protein coupled receptor 1 family. In terms of assembly, interacts with MGRN1, but does not undergo MGRN1-mediated ubiquitination; this interaction competes with GNAS-binding and thus inhibits agonist-induced cAMP production. Interacts with OPN3; the interaction results in a decrease in MC1R-mediated cAMP signaling and ultimately a decrease in melanin production in melanocytes.

The protein localises to the cell membrane. In terms of biological role, receptor for MSH (alpha, beta and gamma) and ACTH. The activity of this receptor is mediated by G proteins which activate adenylate cyclase. Mediates melanogenesis, the production of eumelanin (black/brown) and phaeomelanin (red/yellow), via regulation of cAMP signaling in melanocytes. The protein is Melanocyte-stimulating hormone receptor (MC1R) of Cervus elaphus (Red deer).